A 230-amino-acid chain; its full sequence is Cytochrome c oxidase subunit 2 (230 aa).

Over 1-14 (MAYPLQLGFQDATS) the chain is Mitochondrial intermembrane. A helical membrane pass occupies residues 15–45 (PIMEELLHFHDHTLMIVFLISSLVLYIISTM). Topologically, residues 46–59 (LTTKLTHTNTMDAQ) are mitochondrial matrix. The chain crosses the membrane as a helical span at residues 60-87 (EVETIWTILPAIILILIALPSLRILYMM). Residues 88–230 (DEINNPNLTI…NWTSSMMSTS (143 aa)) lie on the Mitochondrial intermembrane side of the membrane. Residues His-161, Cys-196, Glu-198, Cys-200, His-204, and Met-207 each coordinate Cu cation. Glu-198 lines the Mg(2+) pocket. At Tyr-218 the chain carries Phosphotyrosine.

It belongs to the cytochrome c oxidase subunit 2 family. As to quaternary structure, component of the cytochrome c oxidase (complex IV, CIV), a multisubunit enzyme composed of 14 subunits. The complex is composed of a catalytic core of 3 subunits MT-CO1, MT-CO2 and MT-CO3, encoded in the mitochondrial DNA, and 11 supernumerary subunits COX4I, COX5A, COX5B, COX6A, COX6B, COX6C, COX7A, COX7B, COX7C, COX8 and NDUFA4, which are encoded in the nuclear genome. The complex exists as a monomer or a dimer and forms supercomplexes (SCs) in the inner mitochondrial membrane with NADH-ubiquinone oxidoreductase (complex I, CI) and ubiquinol-cytochrome c oxidoreductase (cytochrome b-c1 complex, complex III, CIII), resulting in different assemblies (supercomplex SCI(1)III(2)IV(1) and megacomplex MCI(2)III(2)IV(2)). Found in a complex with TMEM177, COA6, COX18, COX20, SCO1 and SCO2. Interacts with TMEM177 in a COX20-dependent manner. Interacts with COX20. Interacts with COX16. The cofactor is Cu cation.

Its subcellular location is the mitochondrion inner membrane. The enzyme catalyses 4 Fe(II)-[cytochrome c] + O2 + 8 H(+)(in) = 4 Fe(III)-[cytochrome c] + 2 H2O + 4 H(+)(out). Its function is as follows. Component of the cytochrome c oxidase, the last enzyme in the mitochondrial electron transport chain which drives oxidative phosphorylation. The respiratory chain contains 3 multisubunit complexes succinate dehydrogenase (complex II, CII), ubiquinol-cytochrome c oxidoreductase (cytochrome b-c1 complex, complex III, CIII) and cytochrome c oxidase (complex IV, CIV), that cooperate to transfer electrons derived from NADH and succinate to molecular oxygen, creating an electrochemical gradient over the inner membrane that drives transmembrane transport and the ATP synthase. Cytochrome c oxidase is the component of the respiratory chain that catalyzes the reduction of oxygen to water. Electrons originating from reduced cytochrome c in the intermembrane space (IMS) are transferred via the dinuclear copper A center (CU(A)) of subunit 2 and heme A of subunit 1 to the active site in subunit 1, a binuclear center (BNC) formed by heme A3 and copper B (CU(B)). The BNC reduces molecular oxygen to 2 water molecules using 4 electrons from cytochrome c in the IMS and 4 protons from the mitochondrial matrix. This is Cytochrome c oxidase subunit 2 (MT-CO2) from Ornithorhynchus anatinus (Duckbill platypus).